The following is a 1033-amino-acid chain: Tyrosine-protein kinase-like otk (1033 aa).

The signal sequence occupies residues 1 to 22 (MTARMISICGLVMALMMASVLA). The Extracellular portion of the chain corresponds to 23 to 581 (SSSRFQRVPQ…GGDGFLVTRA (559 aa)). Ig-like C2-type domains follow at residues 25–114 (SRFQ…AKLS), 113–199 (LSVI…RVMS), 251–365 (PEDL…APIN), 368–463 (PGIL…VAIN), and 468–558 (PKFS…VQLV). N39 carries N-linked (GlcNAc...) asparagine glycosylation. Intrachain disulfides connect C46-C95, C137-C188, C276-C354, and C399-C447. N336, N417, N429, N444, N457, N512, and N524 each carry an N-linked (GlcNAc...) asparagine glycan. C490 and C542 are oxidised to a cystine. Residues 582–602 (VLITMTVALAYIVLVVGLMLW) traverse the membrane as a helical segment. The Cytoplasmic segment spans residues 603-1033 (CRYRRQARKA…LSKAMQSAEK (431 aa)). 2 disordered regions span residues 617–679 (LSTK…KKSA) and 718–760 (SPSD…KTSM). Over residues 655–673 (KSSGDAQKSDDTACSQQSR) the composition is skewed to polar residues. Position 678 is a phosphoserine (S678). The 337-residue stretch at 692–1028 (LSELIQIGRG…QLGAALSKAM (337 aa)) folds into the Protein kinase; inactive domain. Basic and acidic residues predominate over residues 720-731 (SDKDADTEKQHS).

The protein belongs to the protein kinase superfamily. Tyr protein kinase family. Insulin receptor subfamily. Interacts with plexA; component of a receptor complex that mediates the repulsive signaling in response to Semaphorin ligands. As to expression, dynamically expressed during embryogenesis in several areas of the developing nervous system, including neurons and fasciculating axons. Expression in stage 7 embryos is seen in the anterior midgut primordia, cephalic furrow and along the germinal band. At stage 11, expression is in 15 stripes over the trunk region, and in the anterior and posterior midgut primordia. Stage 12 shows expression in the developing nervous system, procephalic lobe and maxillar bud. Stage 13 shows expression in the ventral cord, maxillar segment and in three regions of the gut. At stage 16 expression is preferentially detected throughout the nervous system, including the neuromers in the ventral cord and the supraesophageal ganglion (at protein level). In larva, expression is seen in developing R cells and is localized predominantly to R1-R6 growth cones.

Its subcellular location is the cell membrane. Functionally, acts as a calcium-dependent, homophilic cell adhesion molecule that regulates neural recognition during the development of the nervous system. Component of the repulsive Plexin signaling response to regulate motor axon guidance at the embryonic stage. Also component of a receptor complex that is required in the adult visual system to innervate the lamina layer; specific targeting of R1-R6 axons. This is Tyrosine-protein kinase-like otk from Drosophila melanogaster (Fruit fly).